A 442-amino-acid polypeptide reads, in one-letter code: Adenylosuccinate synthetase (442 aa).

GTP contacts are provided by residues 16–22 (GDEGKGK) and 44–46 (GHT). The Proton acceptor role is filled by Asp17. Mg(2+)-binding residues include Asp17 and Gly44. Residues 17 to 20 (DEGK), 42 to 45 (NAGH), Thr133, Arg147, Gln228, Thr243, and Arg307 each bind IMP. His45 acts as the Proton donor in catalysis. A substrate-binding site is contributed by 303 to 309 (AVTGRPR). Residues Arg309, 335–337 (KLD), and 417–419 (STG) each bind GTP.

This sequence belongs to the adenylosuccinate synthetase family. Homodimer. It depends on Mg(2+) as a cofactor.

The protein resides in the cytoplasm. It carries out the reaction IMP + L-aspartate + GTP = N(6)-(1,2-dicarboxyethyl)-AMP + GDP + phosphate + 2 H(+). It functions in the pathway purine metabolism; AMP biosynthesis via de novo pathway; AMP from IMP: step 1/2. Functionally, plays an important role in the de novo pathway of purine nucleotide biosynthesis. Catalyzes the first committed step in the biosynthesis of AMP from IMP. This is Adenylosuccinate synthetase from Koribacter versatilis (strain Ellin345).